We begin with the raw amino-acid sequence, 399 residues long: Serpin-Z4 (399 aa).

Residues 36–56 (GNVAFSPLSLHVALSLITAGA) form a signal for targeting protein Z4 into the ER lumen region. The tract at residues 343–367 (GTEAGAATVAMGVAMSMPLKVDLVD) is RCL.

The protein belongs to the serpin family. In terms of tissue distribution, highly expressed in embryo and endosperm. Is accumulated and stored in the endosperm, where it exists in a free and a bound form. Expressed in roots, coleoptiles, shoots and leaves.

In terms of biological role, a major component of the endosperm albumin, this protein acts as a storage protein during grain filling, contributing a substantial part of the grain's lysine. May have an inhibitory function during filling or germination. Inhibits cathepsin G in vitro. In Hordeum vulgare (Barley), this protein is Serpin-Z4 (PAZ1).